The chain runs to 251 residues: 5'-nucleotidase SurE (251 aa).

A divalent metal cation-binding residues include Asp8, Asp9, Ser39, and Asn91.

This sequence belongs to the SurE nucleotidase family. It depends on a divalent metal cation as a cofactor.

It localises to the cytoplasm. It catalyses the reaction a ribonucleoside 5'-phosphate + H2O = a ribonucleoside + phosphate. In terms of biological role, nucleotidase that shows phosphatase activity on nucleoside 5'-monophosphates. In Thioalkalivibrio sulfidiphilus (strain HL-EbGR7), this protein is 5'-nucleotidase SurE.